The primary structure comprises 163 residues: Ribosome maturation factor RimP (163 aa).

This sequence belongs to the RimP family.

Its subcellular location is the cytoplasm. Its function is as follows. Required for maturation of 30S ribosomal subunits. The chain is Ribosome maturation factor RimP from Polynucleobacter asymbioticus (strain DSM 18221 / CIP 109841 / QLW-P1DMWA-1) (Polynucleobacter necessarius subsp. asymbioticus).